Here is a 90-residue protein sequence, read N- to C-terminus: Probable Fe(2+)-trafficking protein (90 aa).

This sequence belongs to the Fe(2+)-trafficking protein family. As to quaternary structure, monomer.

Functionally, could be a mediator in iron transactions between iron acquisition and iron-requiring processes, such as synthesis and/or repair of Fe-S clusters in biosynthetic enzymes. This chain is Probable Fe(2+)-trafficking protein, found in Sodalis glossinidius (strain morsitans).